A 218-amino-acid polypeptide reads, in one-letter code: 3-oxo-tetronate 4-phosphate decarboxylase (218 aa).

The Proton acceptor role is filled by glutamate 86. The Zn(2+) site is built by glutamate 86, histidine 105, and histidine 107. Tyrosine 132 (proton donor) is an active-site residue. Histidine 172 contributes to the Zn(2+) binding site.

The protein belongs to the aldolase class II family. AraD/FucA subfamily. Zn(2+) is required as a cofactor.

The catalysed reaction is 3-dehydro-4-O-phospho-D-erythronate + H(+) = dihydroxyacetone phosphate + CO2. The enzyme catalyses 3-dehydro-4-O-phospho-L-erythronate + H(+) = dihydroxyacetone phosphate + CO2. In terms of biological role, catalyzes the decarboxylation of 3-oxo-tetronate 4-phosphate to dihydroxyacetone phosphate (DHAP) and CO(2). In Pectobacterium atrosepticum (strain SCRI 1043 / ATCC BAA-672) (Erwinia carotovora subsp. atroseptica), this protein is 3-oxo-tetronate 4-phosphate decarboxylase.